A 240-amino-acid polypeptide reads, in one-letter code: MSVLFISDLHLEAERPDITRAFLSFLDERARRAEALYILGDFFEAWIGDDGMDAFQRSIAQSLRQVADGGTRIYLMHGNRDFLIGKAFCREAGCTLLPDPSVIDLYGEPVLLMHGDSLCTRDEAYMRLRRWLRNPLTLWVLRHLPLATRHKLARKLRKESRAQTRMKAVDIIDVTPEEVPRVMRGHGVRTLIHGHTHRPAEHPLDIDGQPARRIVLGDWDRQGWALEIDANGHRQAPFPL.

Mn(2+) contacts are provided by Asp8, His10, Asp41, Asn79, and His114. A substrate-binding site is contributed by 79–80 (NR). Substrate contacts are provided by Asp122, Ser160, Thr164, Lys167, and His195. The Mn(2+) site is built by His195 and His197.

The protein belongs to the LpxH family. Mn(2+) serves as cofactor.

The protein resides in the cell inner membrane. It catalyses the reaction UDP-2-N,3-O-bis[(3R)-3-hydroxytetradecanoyl]-alpha-D-glucosamine + H2O = 2-N,3-O-bis[(3R)-3-hydroxytetradecanoyl]-alpha-D-glucosaminyl 1-phosphate + UMP + 2 H(+). It functions in the pathway glycolipid biosynthesis; lipid IV(A) biosynthesis; lipid IV(A) from (3R)-3-hydroxytetradecanoyl-[acyl-carrier-protein] and UDP-N-acetyl-alpha-D-glucosamine: step 4/6. Functionally, hydrolyzes the pyrophosphate bond of UDP-2,3-diacylglucosamine to yield 2,3-diacylglucosamine 1-phosphate (lipid X) and UMP by catalyzing the attack of water at the alpha-P atom. Involved in the biosynthesis of lipid A, a phosphorylated glycolipid that anchors the lipopolysaccharide to the outer membrane of the cell. The polypeptide is UDP-2,3-diacylglucosamine hydrolase (Pseudomonas aeruginosa (strain UCBPP-PA14)).